A 113-amino-acid polypeptide reads, in one-letter code: UPF0342 protein MGAS10750_Spy0713 (113 aa).

It belongs to the UPF0342 family.

The sequence is that of UPF0342 protein MGAS10750_Spy0713 from Streptococcus pyogenes serotype M4 (strain MGAS10750).